The primary structure comprises 505 residues: 2,3-bisphosphoglycerate-independent phosphoglycerate mutase (505 aa).

Mn(2+)-binding residues include Asp13 and Ser63. The active-site Phosphoserine intermediate is the Ser63. Substrate is bound by residues His124, 153–154 (RD), Arg183, Arg189, 254–257 (RADR), and Lys329. Positions 395, 399, 436, 437, and 455 each coordinate Mn(2+).

It belongs to the BPG-independent phosphoglycerate mutase family. In terms of assembly, monomer. It depends on Mn(2+) as a cofactor.

The catalysed reaction is (2R)-2-phosphoglycerate = (2R)-3-phosphoglycerate. It participates in carbohydrate degradation; glycolysis; pyruvate from D-glyceraldehyde 3-phosphate: step 3/5. Catalyzes the interconversion of 2-phosphoglycerate and 3-phosphoglycerate. The polypeptide is 2,3-bisphosphoglycerate-independent phosphoglycerate mutase (Agrobacterium fabrum (strain C58 / ATCC 33970) (Agrobacterium tumefaciens (strain C58))).